A 156-amino-acid polypeptide reads, in one-letter code: Small ribosomal subunit protein uS10m (156 aa).

It belongs to the universal ribosomal protein uS10 family.

The protein localises to the mitochondrion. In terms of biological role, ribosomal protein required for normal mitochondrial function and normal larval development. Thought to have a role in insulin/IGF signaling. The polypeptide is Small ribosomal subunit protein uS10m (mrps-10) (Caenorhabditis elegans).